A 304-amino-acid polypeptide reads, in one-letter code: UDP-3-O-acyl-N-acetylglucosamine deacetylase (304 aa).

3 residues coordinate Zn(2+): His78, His235, and Asp239. The Proton donor role is filled by His262.

The protein belongs to the LpxC family. Zn(2+) is required as a cofactor.

It catalyses the reaction a UDP-3-O-[(3R)-3-hydroxyacyl]-N-acetyl-alpha-D-glucosamine + H2O = a UDP-3-O-[(3R)-3-hydroxyacyl]-alpha-D-glucosamine + acetate. Its pathway is glycolipid biosynthesis; lipid IV(A) biosynthesis; lipid IV(A) from (3R)-3-hydroxytetradecanoyl-[acyl-carrier-protein] and UDP-N-acetyl-alpha-D-glucosamine: step 2/6. In terms of biological role, catalyzes the hydrolysis of UDP-3-O-myristoyl-N-acetylglucosamine to form UDP-3-O-myristoylglucosamine and acetate, the committed step in lipid A biosynthesis. In Anaeromyxobacter sp. (strain Fw109-5), this protein is UDP-3-O-acyl-N-acetylglucosamine deacetylase.